We begin with the raw amino-acid sequence, 575 residues long: Phosphoenolpyruvate-protein phosphotransferase (575 aa).

H189 (tele-phosphohistidine intermediate) is an active-site residue. Positions 296 and 332 each coordinate phosphoenolpyruvate. Positions 431 and 455 each coordinate Mg(2+). Residues N454–D455 and R465 each bind phosphoenolpyruvate. The active-site Proton donor is the C502.

It belongs to the PEP-utilizing enzyme family. In terms of assembly, homodimer. It depends on Mg(2+) as a cofactor.

The protein localises to the cytoplasm. It carries out the reaction L-histidyl-[protein] + phosphoenolpyruvate = N(pros)-phospho-L-histidyl-[protein] + pyruvate. In terms of biological role, general (non sugar-specific) component of the phosphoenolpyruvate-dependent sugar phosphotransferase system (sugar PTS). This major carbohydrate active-transport system catalyzes the phosphorylation of incoming sugar substrates concomitantly with their translocation across the cell membrane. Enzyme I transfers the phosphoryl group from phosphoenolpyruvate (PEP) to the phosphoryl carrier protein (HPr). The sequence is that of Phosphoenolpyruvate-protein phosphotransferase (ptsI) from Salmonella typhimurium (strain LT2 / SGSC1412 / ATCC 700720).